The primary structure comprises 559 residues: uncharacterized protein (559 aa).

2 disordered regions span residues 315-360 and 454-559; these read TDDA…ERDI and DKID…STEN. Residues 320–329 are compositionally biased toward polar residues; the sequence is NENSDNSMNT. Positions 348-357 are enriched in acidic residues; that stretch reads DNNDDSDDSE. Positions 433-495 form a coiled coil; it reads ELKIQEMEKI…KRRQKRSQRS (63 aa). Residues 454-501 are compositionally biased toward basic and acidic residues; sequence DKIDMDQIKSEMSRRRDESNKRRDEKRKDREEKRRQKRSQRSDTRKQG. A compositionally biased stretch (low complexity) spans 507 to 527; the sequence is SDEATSDQTQSTDSNNTTQTA.

It localises to the virion. This is an uncharacterized protein from Acanthamoeba polyphaga mimivirus (APMV).